The following is a 170-amino-acid chain: Adenine phosphoribosyltransferase (170 aa).

Belongs to the purine/pyrimidine phosphoribosyltransferase family. In terms of assembly, homodimer.

It localises to the cytoplasm. The catalysed reaction is AMP + diphosphate = 5-phospho-alpha-D-ribose 1-diphosphate + adenine. It functions in the pathway purine metabolism; AMP biosynthesis via salvage pathway; AMP from adenine: step 1/1. Catalyzes a salvage reaction resulting in the formation of AMP, that is energically less costly than de novo synthesis. This Prochlorococcus marinus (strain MIT 9312) protein is Adenine phosphoribosyltransferase.